Here is a 92-residue protein sequence, read N- to C-terminus: Large ribosomal subunit protein bL28 (92 aa).

The disordered stretch occupies residues M1–I34.

It belongs to the bacterial ribosomal protein bL28 family.

The protein is Large ribosomal subunit protein bL28 of Borrelia turicatae (strain 91E135).